The primary structure comprises 259 residues: 3'-5' ssDNA/RNA exonuclease TatD (259 aa).

A divalent metal cation is bound by residues glutamate 92, histidine 128, and histidine 153.

Belongs to the metallo-dependent hydrolases superfamily. TatD-type hydrolase family. TatD subfamily. As to quaternary structure, monomer. It depends on Mg(2+) as a cofactor.

The protein resides in the cytoplasm. 3'-5' exonuclease that prefers single-stranded DNA and RNA. May play a role in the H(2)O(2)-induced DNA damage repair. The sequence is that of 3'-5' ssDNA/RNA exonuclease TatD from Erwinia amylovora (strain ATCC 49946 / CCPPB 0273 / Ea273 / 27-3).